Consider the following 87-residue polypeptide: Small ribosomal subunit protein bS20 (87 aa).

The tract at residues 1-25 is disordered; the sequence is MANIKSAKKRAVQSEKRRKHNASRR.

Belongs to the bacterial ribosomal protein bS20 family.

In terms of biological role, binds directly to 16S ribosomal RNA. The protein is Small ribosomal subunit protein bS20 of Yersinia pseudotuberculosis serotype O:1b (strain IP 31758).